The primary structure comprises 296 residues: Decaprenyl diphosphate synthase (296 aa).

Residues 1 to 24 (MARDARKRTSSNFPQLPPAPDDYP) are disordered. Residue aspartate 76 is part of the active site. A Mg(2+)-binding site is contributed by aspartate 76. Substrate is bound by residues 76-80 (DGNGR), tryptophan 81, arginine 89, histidine 93, 121-124 (STEN), tryptophan 125, arginine 127, arginine 168, arginine 244, and 250-252 (RSS). Asparagine 124 (proton acceptor) is an active-site residue. Glutamate 263 serves as a coordination point for Mg(2+). Position 292–294 (292–294 (RFG)) interacts with substrate.

This sequence belongs to the UPP synthase family. As to quaternary structure, homodimer. Mg(2+) is required as a cofactor. The cofactor is Mn(2+).

The protein resides in the cell membrane. It catalyses the reaction (2Z,6E)-farnesyl diphosphate + 7 isopentenyl diphosphate = (2Z,6Z,10Z,14Z,18Z,22Z,26Z,30Z,34E)-decaprenyl diphosphate + 7 diphosphate. The enzyme catalyses n isopentenyl diphosphate + (2E,6E)-farnesyl diphosphate = a di-trans,poly-cis-polyprenyl diphosphate + n diphosphate. With respect to regulation, activated by dithiothreitol and inhibited by EDTA. Catalyzes the sequential condensation of isopentenyl diphosphate (IPP) in the cis configuration with (2Z,6E)-farnesyl diphosphate (Z-FPP or EZ-FPP) generating the 50 carbon product trans,polycis-decaprenyl diphosphate. When (2E,6E)-farnesyl diphosphate (E-FPP or EE-FPP) is used in vitro, both primary products decaprenyl diphosphate and (2E,6E,10E)-geranylgeranyl diphosphate (EEE-GGPP) are synthesized. M.tuberculosis does not synthesize (2E,6E,10Z)-geranylgeranyl diphosphate (EEZ-GGPP) and heptaprenyl diphosphate. Can also accept many different allylic substrates, including E-geranyl diphosphate (E-GPP), neryl diphosphate (NPP), and all-trans-geranyl-geranyl diphosphate. This Mycobacterium tuberculosis (strain ATCC 25618 / H37Rv) protein is Decaprenyl diphosphate synthase (uppS).